The chain runs to 297 residues: Protoheme IX farnesyltransferase 1 (297 aa).

9 helical membrane-spanning segments follow: residues 23-43, 45-65, 93-113, 117-137, 145-165, 171-191, 216-236, 241-261, and 277-297; these read VVVL…RAGV, WSVL…AAAV, LPAL…LLMF, LTAW…TGFL, IVIG…AVSG, PLLL…ALAI, LHIL…YAIH, LYLV…WVLY, and IGYL…LLNL.

This sequence belongs to the UbiA prenyltransferase family. Protoheme IX farnesyltransferase subfamily.

Its subcellular location is the cell inner membrane. The catalysed reaction is heme b + (2E,6E)-farnesyl diphosphate + H2O = Fe(II)-heme o + diphosphate. It participates in porphyrin-containing compound metabolism; heme O biosynthesis; heme O from protoheme: step 1/1. Functionally, converts heme B (protoheme IX) to heme O by substitution of the vinyl group on carbon 2 of heme B porphyrin ring with a hydroxyethyl farnesyl side group. The chain is Protoheme IX farnesyltransferase 1 from Pseudomonas putida (strain W619).